The sequence spans 383 residues: tRNA(Met) cytidine acetate ligase (383 aa).

Residues 7–20, Gly-101, Asn-153, and 178–179 contribute to the ATP site; these read IAEF…HEFL and RI.

The protein belongs to the TmcAL family.

The protein resides in the cytoplasm. The enzyme catalyses cytidine(34) in elongator tRNA(Met) + acetate + ATP = N(4)-acetylcytidine(34) in elongator tRNA(Met) + AMP + diphosphate. In terms of biological role, catalyzes the formation of N(4)-acetylcytidine (ac(4)C) at the wobble position of elongator tRNA(Met), using acetate and ATP as substrates. First activates an acetate ion to form acetyladenylate (Ac-AMP) and then transfers the acetyl group to tRNA to form ac(4)C34. This Lactobacillus helveticus (strain DPC 4571) protein is tRNA(Met) cytidine acetate ligase.